We begin with the raw amino-acid sequence, 384 residues long: Cell adhesion molecule CEACAM18 (384 aa).

The signal sequence occupies residues 1-30; that stretch reads MDLSRPRWSLWRRVFLMASLLACGICQASG. N-linked (GlcNAc...) asparagine glycans are attached at residues Asn108, Asn112, Asn121, Asn162, and Asn270. Residues 227–314 form the Ig-like C2-type domain; it reads PDYVLLRSNP…LIMYMDVRIQ (88 aa). Cys255 and Cys296 are joined by a disulfide. The tract at residues 358–384 is disordered; that stretch reads QPLLNQDKSGSMSVHPRPEDKTRRASR. Residues 359-369 show a composition bias toward polar residues; that stretch reads PLLNQDKSGSM. The span at 373-384 shows a compositional bias: basic and acidic residues; sequence PRPEDKTRRASR.

Belongs to the immunoglobulin superfamily. CEA family.

This Homo sapiens (Human) protein is Cell adhesion molecule CEACAM18.